The sequence spans 235 residues: IIGGDECNINEHRFLVALYDVWSGSFLCGGTLINQEWVLTAAHCNMSNIYIYLGMHNQSVQFDDEERRYPKEKYLFRCSKNFTKWDKDIMLIRLNKPVRNSEHIAPLSLPSSPPIVGSVCRVMGWGTITSPNETLPDVPRCVNINLFNYTVCRGVFPRLPERSRILCAGVLEGGIDTCKRDSGGPLICNGQFQGIVSWGPKRCAQPRKPALYSKVFDHLDWIQSIIAGNKTVNCP.

Residues 1-227 (IIGGDECNIN…HLDWIQSIIA (227 aa)) form the Peptidase S1 domain. Cystine bridges form between C7-C141, C28-C44, C78-C234, C120-C188, C152-C167, and C178-C203. The Charge relay system role is filled by H43. N-linked (GlcNAc...) asparagine glycosylation is found at N45, N57, and N81. D88 acts as the Charge relay system in catalysis. N132 and N148 each carry an N-linked (GlcNAc...) asparagine glycan. S182 functions as the Charge relay system in the catalytic mechanism. A glycan (N-linked (GlcNAc...) asparagine) is linked at N229.

It belongs to the peptidase S1 family. Snake venom subfamily. Monomer. Post-translationally, glycosylated. In terms of tissue distribution, expressed by the venom gland.

The protein resides in the secreted. Not inhibited by hirudin. In terms of biological role, thrombin-like snake venom serine protease that has coagulant activity by releasing fibrinopeptides A and B from fibrinogen alpha (FGA) and beta (FGB), with a preference for beta chain. This Agkistrodon bilineatus (Cantil) protein is Thrombin-like enzyme bilineobin.